Consider the following 197-residue polypeptide: Imidazoleglycerol-phosphate dehydratase (197 aa).

This sequence belongs to the imidazoleglycerol-phosphate dehydratase family.

The protein resides in the cytoplasm. The enzyme catalyses D-erythro-1-(imidazol-4-yl)glycerol 3-phosphate = 3-(imidazol-4-yl)-2-oxopropyl phosphate + H2O. The protein operates within amino-acid biosynthesis; L-histidine biosynthesis; L-histidine from 5-phospho-alpha-D-ribose 1-diphosphate: step 6/9. This is Imidazoleglycerol-phosphate dehydratase from Rhodopseudomonas palustris (strain BisA53).